The following is a 132-amino-acid chain: Small ribosomal subunit protein uS8 (132 aa).

Belongs to the universal ribosomal protein uS8 family. As to quaternary structure, part of the 30S ribosomal subunit. Contacts proteins S5 and S12.

In terms of biological role, one of the primary rRNA binding proteins, it binds directly to 16S rRNA central domain where it helps coordinate assembly of the platform of the 30S subunit. The protein is Small ribosomal subunit protein uS8 of Psychrobacter arcticus (strain DSM 17307 / VKM B-2377 / 273-4).